A 116-amino-acid polypeptide reads, in one-letter code: Sperm mitochondrial-associated cysteine-rich protein (116 aa).

7 consecutive repeat copies span residues 6-13, 14-21, 30-37, 38-45, 46-53, 54-61, and 62-68. The 7 X 7 (OR 8) AA approximate repeats stretch occupies residues 6-68; that stretch reads KHSKCCPAKG…CQPKPPCCIQ (63 aa). Positions 80–116 are disordered; that stretch reads VSPLNMESEPNSPQTQDKGCQTQQQPHSPQNESRPSK. The segment covering 93 to 104 has biased composition (low complexity); that stretch reads QTQDKGCQTQQQ. Positions 105–116 are enriched in polar residues; the sequence is PHSPQNESRPSK.

Testis. Is selectively expressed in the spermatids of seminiferous tubules.

Its subcellular location is the cytoplasm. The protein localises to the mitochondrion membrane. Functionally, involved in sperm motility. Its absence is associated with genetic background dependent male infertility. Infertility may be due to reduced sperm motility in the female reproductive tract and inability to penetrate the oocyte zona pellucida. This chain is Sperm mitochondrial-associated cysteine-rich protein (SMCP), found in Homo sapiens (Human).